Here is a 240-residue protein sequence, read N- to C-terminus: 1-acyl-sn-glycerol-3-phosphate acyltransferase (240 aa).

Positions 73-78 (HQNNYD) match the HXXXXD motif motif.

The protein belongs to the 1-acyl-sn-glycerol-3-phosphate acyltransferase family.

It localises to the cell inner membrane. It catalyses the reaction a 1-acyl-sn-glycero-3-phosphate + an acyl-CoA = a 1,2-diacyl-sn-glycero-3-phosphate + CoA. It participates in phospholipid metabolism; CDP-diacylglycerol biosynthesis; CDP-diacylglycerol from sn-glycerol 3-phosphate: step 2/3. Functionally, converts lysophosphatidic acid (LPA) into phosphatidic acid by incorporating acyl moiety at the 2 position. The chain is 1-acyl-sn-glycerol-3-phosphate acyltransferase (plsC) from Haemophilus influenzae (strain ATCC 51907 / DSM 11121 / KW20 / Rd).